The chain runs to 291 residues: Elongation factor Ts (291 aa).

The tract at residues 79-82 (TDFV) is involved in Mg(2+) ion dislocation from EF-Tu.

It belongs to the EF-Ts family.

It is found in the cytoplasm. Its function is as follows. Associates with the EF-Tu.GDP complex and induces the exchange of GDP to GTP. It remains bound to the aminoacyl-tRNA.EF-Tu.GTP complex up to the GTP hydrolysis stage on the ribosome. This Anaplasma marginale (strain Florida) protein is Elongation factor Ts.